A 503-amino-acid polypeptide reads, in one-letter code: E3 ubiquitin-protein ligase IE61 (503 aa).

The RING-type zinc-finger motif lies at 19-58 (CAICMSAISGLGKTLPCLHDFCFVCIQTWTSTSAQCPLCR). Disordered regions lie at residues 175–194 (AVIT…PSSR), 367–418 (SGPI…LFVD), and 445–503 (AALP…VRRK). Polar residues predominate over residues 375–388 (GGSTSQDTSVSNIH). Residues 389-403 (RSPPGGSSTQPSSGR) are compositionally biased toward low complexity. Over residues 404-414 (RPGRPKGVKRR) the composition is skewed to basic residues. Over residues 471-480 (PSTSGSSPSP) the composition is skewed to low complexity.

In terms of assembly, interacts with host BTRC; this interaction seems to inactivate SCF-mediated protein degradation in general.

It catalyses the reaction S-ubiquitinyl-[E2 ubiquitin-conjugating enzyme]-L-cysteine + [acceptor protein]-L-lysine = [E2 ubiquitin-conjugating enzyme]-L-cysteine + N(6)-ubiquitinyl-[acceptor protein]-L-lysine.. Functionally, RING-finger E3 ubiquitin ligase that degrades host SP100, one of the major components of ND10 nuclear bodies, thereby disrupting the organization of these bodies. Also plays a role in the inhibition of host NF-kappa-B pathway by blocking the SCF(BTRC)-mediated addition of ubiquitin chains to host IkappaBalpha/NFKBIA, thereby interfering with its degradation. The sequence is that of E3 ubiquitin-protein ligase IE61 from Cercopithecine herpesvirus 9 (strain DHV) (CeHV-9).